The sequence spans 387 residues: 1-deoxy-D-xylulose 5-phosphate reductoisomerase (387 aa).

Residues T10, G11, S12, V13, N38, and N119 each coordinate NADPH. K120 is a binding site for 1-deoxy-D-xylulose 5-phosphate. E121 lines the NADPH pocket. D145 provides a ligand contact to Mn(2+). Positions 146, 147, 170, and 193 each coordinate 1-deoxy-D-xylulose 5-phosphate. Position 147 (E147) interacts with Mn(2+). NADPH is bound at residue G199. 1-deoxy-D-xylulose 5-phosphate-binding residues include S206, N211, K212, and E215. E215 is a Mn(2+) binding site.

This sequence belongs to the DXR family. The cofactor is Mg(2+). Mn(2+) is required as a cofactor.

It carries out the reaction 2-C-methyl-D-erythritol 4-phosphate + NADP(+) = 1-deoxy-D-xylulose 5-phosphate + NADPH + H(+). It functions in the pathway isoprenoid biosynthesis; isopentenyl diphosphate biosynthesis via DXP pathway; isopentenyl diphosphate from 1-deoxy-D-xylulose 5-phosphate: step 1/6. In terms of biological role, catalyzes the NADPH-dependent rearrangement and reduction of 1-deoxy-D-xylulose-5-phosphate (DXP) to 2-C-methyl-D-erythritol 4-phosphate (MEP). The chain is 1-deoxy-D-xylulose 5-phosphate reductoisomerase from Wolbachia sp. subsp. Drosophila simulans (strain wRi).